A 159-amino-acid chain; its full sequence is Large ribosomal subunit protein mL43 (159 aa).

Positions 123–159 (SPSIQGQWHPFTNKPTALGGLRPREVQNPAPTQRPAQ) are disordered.

The protein belongs to the mitochondrion-specific ribosomal protein mL43 family. As to quaternary structure, component of the mitochondrial ribosome large subunit (39S) which comprises a 16S rRNA and about 50 distinct proteins.

The protein localises to the mitochondrion. This chain is Large ribosomal subunit protein mL43 (MRPL43), found in Bos taurus (Bovine).